A 260-amino-acid chain; its full sequence is Thiazole synthase (260 aa).

Lys-101 (schiff-base intermediate with DXP) is an active-site residue. Residues Gly-162, 188-189, and 210-211 each bind 1-deoxy-D-xylulose 5-phosphate; these read AG and NT.

This sequence belongs to the ThiG family. As to quaternary structure, homotetramer. Forms heterodimers with either ThiH or ThiS.

Its subcellular location is the cytoplasm. It carries out the reaction [ThiS sulfur-carrier protein]-C-terminal-Gly-aminoethanethioate + 2-iminoacetate + 1-deoxy-D-xylulose 5-phosphate = [ThiS sulfur-carrier protein]-C-terminal Gly-Gly + 2-[(2R,5Z)-2-carboxy-4-methylthiazol-5(2H)-ylidene]ethyl phosphate + 2 H2O + H(+). It participates in cofactor biosynthesis; thiamine diphosphate biosynthesis. In terms of biological role, catalyzes the rearrangement of 1-deoxy-D-xylulose 5-phosphate (DXP) to produce the thiazole phosphate moiety of thiamine. Sulfur is provided by the thiocarboxylate moiety of the carrier protein ThiS. In vitro, sulfur can be provided by H(2)S. In Acidithiobacillus ferrooxidans (strain ATCC 23270 / DSM 14882 / CIP 104768 / NCIMB 8455) (Ferrobacillus ferrooxidans (strain ATCC 23270)), this protein is Thiazole synthase.